The primary structure comprises 453 residues: Flap endonuclease 1 (453 aa).

The interval 1 to 105 is N-domain; it reads MGIKGLTGLL…SVLAKRFARR (105 aa). Aspartate 34 contacts Mg(2+). Residues arginine 47 and arginine 71 each coordinate DNA. The Mg(2+) site is built by aspartate 87, glutamate 159, glutamate 161, aspartate 180, and aspartate 182. Residues 123–254 are I-domain; that stretch reads DVDKLARRQV…KTALKLMREH (132 aa). Glutamate 159 contacts DNA. DNA is bound by residues glycine 232 and aspartate 234. Mg(2+) is bound at residue aspartate 234. Disordered regions lie at residues 273-336 and 409-453; these read EEIK…VASS and RLDG…KSKN. A compositionally biased stretch (basic residues) spans 320-333; it reads KSPKKKAPAKKKKV. An interaction with PCNA region spans residues 406–414; the sequence is QQGRLDGFF. Positions 417–446 are enriched in basic and acidic residues; the sequence is KPKEPAAKDTGKGKGKATKGEKRKAEEKGS.

Belongs to the XPG/RAD2 endonuclease family. FEN1 subfamily. As to quaternary structure, interacts with PCNA. Three molecules of FEN1 bind to one PCNA trimer with each molecule binding to one PCNA monomer. PCNA stimulates the nuclease activity without altering cleavage specificity. It depends on Mg(2+) as a cofactor. In terms of processing, phosphorylated. Phosphorylation upon DNA damage induces relocalization to the nuclear plasma.

Its subcellular location is the nucleus. The protein resides in the nucleolus. It is found in the nucleoplasm. The protein localises to the mitochondrion. Functionally, structure-specific nuclease with 5'-flap endonuclease and 5'-3' exonuclease activities involved in DNA replication and repair. During DNA replication, cleaves the 5'-overhanging flap structure that is generated by displacement synthesis when DNA polymerase encounters the 5'-end of a downstream Okazaki fragment. It enters the flap from the 5'-end and then tracks to cleave the flap base, leaving a nick for ligation. Also involved in the long patch base excision repair (LP-BER) pathway, by cleaving within the apurinic/apyrimidinic (AP) site-terminated flap. Acts as a genome stabilization factor that prevents flaps from equilibrating into structures that lead to duplications and deletions. Also possesses 5'-3' exonuclease activity on nicked or gapped double-stranded DNA, and exhibits RNase H activity. Also involved in replication and repair of rDNA and in repairing mitochondrial DNA. This is Flap endonuclease 1 from Cryptococcus neoformans var. neoformans serotype D (strain B-3501A) (Filobasidiella neoformans).